Consider the following 154-residue polypeptide: MPQLATICYIDNGKELLMLHRNKKPNDVHEGKWIGVGGKLERGETPQECAAREILEETGLKAKPVLKGVITFPEFTPDLDWYTYVFKVTEFEGDLIDCNEGTLEWVPYDEVLSKPTWEGDHTFVEWLLEDKPFFSAKFVYDGDKLLDTQVDFYE.

One can recognise a Nudix hydrolase domain in the interval 1-129 (MPQLATICYI…DHTFVEWLLE (129 aa)). Mg(2+) contacts are provided by Gly-38, Glu-53, Glu-56, and Glu-57. The short motif at 38 to 59 (GKLERGETPQECAAREILEETG) is the Nudix box element.

Belongs to the Nudix hydrolase family. As to quaternary structure, homotrimer. It depends on Mg(2+) as a cofactor.

The catalysed reaction is 8-oxo-dGTP + H2O = 8-oxo-dGMP + diphosphate + H(+). Its function is as follows. Involved in the DNA repair system to avoid A.T to G.C transversions. Degrades 8-oxo-dGTP to the monophosphate, but is also active on all of the nucleoside triphosphates. This chain is 8-oxo-dGTP diphosphatase (mutX), found in Streptococcus pneumoniae serotype 4 (strain ATCC BAA-334 / TIGR4).